The sequence spans 221 residues: Ribonuclease S-2 (221 aa).

An N-terminal signal peptide occupies residues 1 to 20 (MIYIFTMVFSLNVLILSSSA). Gln31 provides a ligand contact to RNA. The cysteines at positions 37 and 44 are disulfide-linked. RNA-binding positions include His55, 91–92 (NV), Phe101, 104–105 (KQ), and 108–109 (KH). His55 serves as the catalytic Proton donor. Cys70 and Cys112 are joined by a disulfide. N-linked (GlcNAc...) asparagine glycosylation is present at Asn91. Gln105 is a catalytic residue. Catalysis depends on His109, which acts as the Proton acceptor. N-linked (GlcNAc...) asparagine glycans are attached at residues Asn137, Asn153, and Asn195. 2 cysteine pairs are disulfide-bonded: Cys176-Cys214 and Cys191-Cys202.

It belongs to the RNase T2 family. N-linked core structure at Asn-91, Asn-137, and Asn-153 contains xylose and at Asn-195 contains xylose and fucose.

It localises to the secreted. The protein localises to the extracellular space. The catalysed reaction is a ribonucleotidyl-ribonucleotide-RNA + H2O = a 3'-end 3'-phospho-ribonucleotide-RNA + a 5'-end dephospho-ribonucleoside-RNA + H(+). Self-incompatibility (SI) is the inherited ability of a flowering plant to prevent self-fertilization by discriminating between self and non-self pollen during pollination. In many species, self-incompatibility is controlled by the single, multiallelic locus S. The polypeptide is Ribonuclease S-2 (Pyrus pyrifolia (Chinese pear)).